A 192-amino-acid chain; its full sequence is MVRIIAMGQSPLCNFIKEQLKMNIIVYPEFFDNKKLLLQRRVRDYIISLLRNYRKIRYALYPDYYYRDINLPAEITEKITFIYPVHSKNEVEFIAKLKSKYNIIPGFASDSRYRDYDIYWFVNTFREEKWYLGISTWRELREAKRFEFYGGDITGFVLGNHEDRKNPEVLRRKLKEIIEYVSRPQGKQLTLF.

This is an uncharacterized protein from Acidianus convivator (ATV).